The following is a 648-amino-acid chain: Transketolase (648 aa).

Substrate is bound at residue histidine 22. Thiamine diphosphate is bound by residues histidine 62 and 109–111; that span reads GPL. Aspartate 150 contributes to the Mg(2+) binding site. 2 residues coordinate thiamine diphosphate: glycine 151 and asparagine 180. Residues asparagine 180 and valine 182 each coordinate Mg(2+). Substrate-binding residues include histidine 252, arginine 345, and serine 372. Histidine 252 lines the thiamine diphosphate pocket. Glutamate 397 (proton donor) is an active-site residue. Thiamine diphosphate is bound at residue phenylalanine 423. Positions 447, 455, and 506 each coordinate substrate.

Belongs to the transketolase family. In terms of assembly, homodimer. It depends on Mg(2+) as a cofactor. Requires Ca(2+) as cofactor. The cofactor is Mn(2+). Co(2+) is required as a cofactor. Thiamine diphosphate serves as cofactor.

The catalysed reaction is D-sedoheptulose 7-phosphate + D-glyceraldehyde 3-phosphate = aldehydo-D-ribose 5-phosphate + D-xylulose 5-phosphate. Catalyzes the transfer of a two-carbon ketol group from a ketose donor to an aldose acceptor, via a covalent intermediate with the cofactor thiamine pyrophosphate. This chain is Transketolase (tkt), found in Mycoplasma genitalium (strain ATCC 33530 / DSM 19775 / NCTC 10195 / G37) (Mycoplasmoides genitalium).